A 433-amino-acid polypeptide reads, in one-letter code: UPF0761 membrane protein Sde_0901 (433 aa).

Transmembrane regions (helical) follow at residues 46 to 66 (LFAM…FPAF), 103 to 123 (LSAA…TNIE), 142 to 162 (FLLY…GLAM), 185 to 205 (FFSY…FAAV), 217 to 237 (IGGI…GWVV), and 247 to 267 (GAFA…MIIL).

Belongs to the UPF0761 family.

It is found in the cell inner membrane. In Saccharophagus degradans (strain 2-40 / ATCC 43961 / DSM 17024), this protein is UPF0761 membrane protein Sde_0901.